The primary structure comprises 231 residues: Orotidine 5'-phosphate decarboxylase (231 aa).

Substrate contacts are provided by residues aspartate 11, lysine 33, 60–69, threonine 120, arginine 181, glutamine 190, glycine 210, and arginine 211; that span reads DLKFHDIPNT. Catalysis depends on lysine 62, which acts as the Proton donor.

It belongs to the OMP decarboxylase family. Type 1 subfamily. Homodimer.

It carries out the reaction orotidine 5'-phosphate + H(+) = UMP + CO2. It participates in pyrimidine metabolism; UMP biosynthesis via de novo pathway; UMP from orotate: step 2/2. Functionally, catalyzes the decarboxylation of orotidine 5'-monophosphate (OMP) to uridine 5'-monophosphate (UMP). The sequence is that of Orotidine 5'-phosphate decarboxylase from Photobacterium profundum (strain SS9).